Here is a 140-residue protein sequence, read N- to C-terminus: Large ribosomal subunit protein bL17 (140 aa).

The segment at A121 to E140 is disordered.

The protein belongs to the bacterial ribosomal protein bL17 family. Part of the 50S ribosomal subunit. Contacts protein L32.

This chain is Large ribosomal subunit protein bL17, found in Rhodospirillum rubrum (strain ATCC 11170 / ATH 1.1.1 / DSM 467 / LMG 4362 / NCIMB 8255 / S1).